Consider the following 273-residue polypeptide: SUMO-1 cysteine protease S273R (273 aa).

Residues His168 and Asn187 contribute to the active site. Position 226 (Gln226) interacts with substrate. The Nucleophile role is filled by Cys232.

Belongs to the peptidase C63 family.

The protein localises to the host cytoplasm. Its subcellular location is the virion. Cysteine protease that plays several role during infection including processing of the structural polyprotein or inhibition of the host immune response. Catalyzes the maturation of the pp220 and pp62 polyprotein precursors into core-shell proteins. Plays a role in the disruption of host pyroptosis via specific cleavage of gasdermin D/GSDMD. In addition, strongly decreases the host cGAS-STING signaling by targeting IKBKE via its enzymatic activity. Also impairs host FOXJ1-mediated antiviral effect via degradation of FOXJ1. In Ornithodoros (relapsing fever ticks), this protein is SUMO-1 cysteine protease S273R.